The following is a 710-amino-acid chain: Ephexin-1 (710 aa).

A compositionally biased stretch (basic and acidic residues) spans 1 to 20; sequence METKNSEDWGKPQRKSESSS. Positions 1-146 are disordered; that stretch reads METKNSEDWG…TPEECPALTD (146 aa). The tract at residues 1–272 is regulatory region; modulates activity toward RHOA, RAC1 and CDC42; it reads METKNSEDWG…VLDILQPEEI (272 aa). A compositionally biased stretch (polar residues) spans 123-137; sequence QEASESSSTPGNGTT. Y177 is subject to Phosphotyrosine. A disordered region spans residues 192-234; sequence RRQQDAEIQGNSDGSQVGEDAGEEEEEEEEGEEEELASPPERR. Over residues 211–227 the composition is skewed to acidic residues; sequence DAGEEEEEEEEGEEEEL. In terms of domain architecture, DH spans 273–457; that stretch reads RLQEAMFELV…EMVVKACNEG (185 aa). The PH domain occupies 489 to 601; sequence WLLKQGELQQ…WMTSLAPNRR (113 aa). An SH3 domain is found at 612–673; that stretch reads LDCPQVQCVH…PSSMTEEILN (62 aa). A compositionally biased stretch (basic and acidic residues) spans 688 to 699; the sequence is HKMEDPQRSQNK. The segment at 688–710 is disordered; the sequence is HKMEDPQRSQNKDRRKLGSRNRQ. Residues 700–710 are compositionally biased toward basic residues; it reads DRRKLGSRNRQ.

Interacts with CDK5R1 and EPHA4; activated by EPHA4 through the CDK5 kinase. Src-dependent phosphorylation at Tyr-177 upon EPHA4 activation increases the guanine exchange factor activity toward RHOA. Phosphorylation by CDK5 upon EPHA4 activation by EFNA1 may regulate dendritic spine morphogenesis. In terms of tissue distribution, highly expressed in brain and to a lower extent in eye.

It is found in the cytoplasm. The protein resides in the membrane. The protein localises to the cell projection. Its subcellular location is the growth cone. Its function is as follows. Acts as a guanine nucleotide exchange factor (GEF) which differentially activates the GTPases RHOA, RAC1 and CDC42. Plays a role in axon guidance regulating ephrin-induced growth cone collapse and dendritic spine morphogenesis. Upon activation by ephrin through EPHA4, the GEF activity switches toward RHOA resulting in its activation. Activated RHOA promotes cone retraction at the expense of RAC1- and CDC42-stimulated growth cone extension. The chain is Ephexin-1 (Ngef) from Mus musculus (Mouse).